Reading from the N-terminus, the 140-residue chain is Arsenate reductase (140 aa).

The active-site Nucleophile; cysteine thioarsenate intermediate is the cysteine 11.

It belongs to the ArsC family.

It carries out the reaction [glutaredoxin]-dithiol + arsenate + glutathione + H(+) = glutathionyl-S-S-[glutaredoxin] + arsenite + H2O. In terms of biological role, involved in resistance to arsenate. Catalyzes the reduction of arsenate [As(V)] to arsenite [As(III)]. The resulting arsenite is then extruded from the cell via the aquaglyceroporin AqpS. Does not display antimonate reductase activity. The chain is Arsenate reductase from Rhizobium meliloti (strain 1021) (Ensifer meliloti).